A 150-amino-acid chain; its full sequence is Large ribosomal subunit protein bL9 (150 aa).

This sequence belongs to the bacterial ribosomal protein bL9 family.

Binds to the 23S rRNA. The chain is Large ribosomal subunit protein bL9 from Hamiltonella defensa subsp. Acyrthosiphon pisum (strain 5AT).